A 386-amino-acid polypeptide reads, in one-letter code: Chorismate synthase (386 aa).

NADP(+) is bound by residues arginine 45 and arginine 51. FMN-binding positions include 131-133, 251-252, serine 294, 309-313, and arginine 335; these read RTS, QG, and KPIPS.

Belongs to the chorismate synthase family. As to quaternary structure, homotetramer. Requires FMNH2 as cofactor.

The catalysed reaction is 5-O-(1-carboxyvinyl)-3-phosphoshikimate = chorismate + phosphate. Its pathway is metabolic intermediate biosynthesis; chorismate biosynthesis; chorismate from D-erythrose 4-phosphate and phosphoenolpyruvate: step 7/7. Catalyzes the anti-1,4-elimination of the C-3 phosphate and the C-6 proR hydrogen from 5-enolpyruvylshikimate-3-phosphate (EPSP) to yield chorismate, which is the branch point compound that serves as the starting substrate for the three terminal pathways of aromatic amino acid biosynthesis. This reaction introduces a second double bond into the aromatic ring system. The sequence is that of Chorismate synthase from Clostridium tetani (strain Massachusetts / E88).